The primary structure comprises 619 residues: DNA mismatch repair protein MutL (619 aa).

This sequence belongs to the DNA mismatch repair MutL/HexB family.

In terms of biological role, this protein is involved in the repair of mismatches in DNA. It is required for dam-dependent methyl-directed DNA mismatch repair. May act as a 'molecular matchmaker', a protein that promotes the formation of a stable complex between two or more DNA-binding proteins in an ATP-dependent manner without itself being part of a final effector complex. This is DNA mismatch repair protein MutL from Shewanella frigidimarina (strain NCIMB 400).